A 275-amino-acid polypeptide reads, in one-letter code: MLQRSVFFLSDRTGITAETLGHSLLTQFDGIEWKKHYASFLDSAAKAQAVIEQINTIAEQEGQPALVFSTLLDPVMLASIRRADCVLFDFFETCLGTLEAVLQQPPARIPGRSHVLRQDASYFRRIAAIQYALNSDDGANAKILADADVIVVGVSRTGKTPVCVYLALQYGVLAANYPFTPEDMGAIQLPPLLQPLRKKLFGLTLNTSRLQSIREERYPGSHYASFAECQRELQWQNELYRQFDIPSINTTDVSIEEISASIVNRAHLERRQHGT.

153 to 160 serves as a coordination point for ADP; the sequence is GVSRTGKT.

This sequence belongs to the pyruvate, phosphate/water dikinase regulatory protein family. PSRP subfamily.

It carries out the reaction [pyruvate, water dikinase] + ADP = [pyruvate, water dikinase]-phosphate + AMP + H(+). The catalysed reaction is [pyruvate, water dikinase]-phosphate + phosphate + H(+) = [pyruvate, water dikinase] + diphosphate. In terms of biological role, bifunctional serine/threonine kinase and phosphorylase involved in the regulation of the phosphoenolpyruvate synthase (PEPS) by catalyzing its phosphorylation/dephosphorylation. The protein is Putative phosphoenolpyruvate synthase regulatory protein of Nitrosomonas europaea (strain ATCC 19718 / CIP 103999 / KCTC 2705 / NBRC 14298).